A 338-amino-acid chain; its full sequence is Glutaminase (338 aa).

Residues S80, N130, E174, N181, Y205, Y257, and V275 each contribute to the substrate site.

It belongs to the glutaminase family. As to quaternary structure, homotetramer.

It catalyses the reaction L-glutamine + H2O = L-glutamate + NH4(+). The chain is Glutaminase from Microcystis aeruginosa (strain NIES-843 / IAM M-2473).